The primary structure comprises 126 residues: Small ribosomal subunit protein uS13c (126 aa).

The interval 97–126 (PLRGQRTRTNARTRRGGKKTVAGKKKAPRK) is disordered. The segment covering 101–126 (QRTRTNARTRRGGKKTVAGKKKAPRK) has biased composition (basic residues).

The protein belongs to the universal ribosomal protein uS13 family. Part of the 30S ribosomal subunit.

The protein localises to the plastid. Its subcellular location is the chloroplast. Functionally, located at the top of the head of the 30S subunit, it contacts several helices of the 16S rRNA. This chain is Small ribosomal subunit protein uS13c, found in Pyropia yezoensis (Susabi-nori).